The sequence spans 306 residues: MLNYVIKRLLGLIPTLFIVSVLVFLFVHMLPGDPARLIAGPEADAQVIELVRQQLGLDQPLYHQFWHYISNAVQGDFGLSMVSRRPVADEIASRFMPTLWLTITSMVWAVIFGMAAGIIAAVWRNRWPDRLSMTIAVSGISFPAFALGMLLIQVFSVELGWLPTVGADSWQHYILSSLTLGAAVAAVMARFTRASFVDVLSEDYMRTARAKGVSETWVVLKHGLRNAMIPVVTMMGLQFGFLLGGSIVVEKVFNWPGLGRLLVDSVEMRDYPVIQAEILLFSLEFILINLVVDVLYAAINPAIRYK.

The Cytoplasmic portion of the chain corresponds to 1–8; that stretch reads MLNYVIKR. The chain crosses the membrane as a helical span at residues 9 to 29; it reads LLGLIPTLFIVSVLVFLFVHM. Residues 30–102 are Periplasmic-facing; that stretch reads LPGDPARLIA…SRFMPTLWLT (73 aa). One can recognise an ABC transmembrane type-1 domain in the interval 95-292; sequence FMPTLWLTIT…LEFILINLVV (198 aa). Residues 103-123 traverse the membrane as a helical segment; it reads ITSMVWAVIFGMAAGIIAAVW. Over 124-134 the chain is Cytoplasmic; that stretch reads RNRWPDRLSMT. The helical transmembrane segment at 135 to 155 threads the bilayer; sequence IAVSGISFPAFALGMLLIQVF. The Periplasmic segment spans residues 156 to 168; it reads SVELGWLPTVGAD. Residues 169 to 189 traverse the membrane as a helical segment; that stretch reads SWQHYILSSLTLGAAVAAVMA. Residues 190–228 are Cytoplasmic-facing; it reads RFTRASFVDVLSEDYMRTARAKGVSETWVVLKHGLRNAM. A helical membrane pass occupies residues 229-249; the sequence is IPVVTMMGLQFGFLLGGSIVV. The Periplasmic portion of the chain corresponds to 250-277; the sequence is EKVFNWPGLGRLLVDSVEMRDYPVIQAE. The helical transmembrane segment at 278 to 298 threads the bilayer; sequence ILLFSLEFILINLVVDVLYAA. Over 299–306 the chain is Cytoplasmic; it reads INPAIRYK.

Belongs to the binding-protein-dependent transport system permease family. The complex is composed of two ATP-binding proteins (GsiA), two transmembrane proteins (GsiC and GsiD) and a solute-binding protein (GsiB).

The protein resides in the cell inner membrane. Part of the ABC transporter complex GsiABCD involved in glutathione import. Probably responsible for the translocation of the substrate across the membrane. This chain is Glutathione transport system permease protein GsiC, found in Shigella boydii serotype 4 (strain Sb227).